The primary structure comprises 1596 residues: SET-binding protein (1596 aa).

Polar residues predominate over residues 1 to 12; the sequence is MESRETLSSSRQ. Disordered stretches follow at residues 1 to 83, 134 to 426, and 475 to 518; these read MESR…WVAG, KQSG…SIKA, and SPSV…SRKL. Basic and acidic residues predominate over residues 64–81; that stretch reads GSGRDVDSNSNADSEKWV. Low complexity predominate over residues 164-175; the sequence is LTASDLAASDLK. 2 stretches are compositionally biased toward polar residues: residues 213 to 236 and 270 to 282; these read KSSS…QNCF and AGNT…NNNK. The segment covering 290 to 306 has biased composition (low complexity); the sequence is APSPSSHSSPAPPSSSA. The span at 363 to 372 shows a compositional bias: basic and acidic residues; sequence DNTEGKREGY. Over residues 375 to 395 the composition is skewed to polar residues; it reads DSAQEASPARQNVSSASNPEN. The a.T hook 1 DNA-binding region spans 584-596; the sequence is KKKRGRPKKQPLL. Disordered regions lie at residues 604–624, 722–763, and 777–796; these read GTST…KKRK, YIGK…AVPS, and HPLS…ASTE. Positions 779–796 are enriched in polar residues; sequence LSTQLGGSNGNLSPASTE. Lys-817 carries the post-translational modification N6-acetyllysine. Polar residues predominate over residues 854–880; that stretch reads SPVSESHSEETIPSDSGIGTDNNSTSD. The tract at residues 854–889 is disordered; sequence SPVSESHSEETIPSDSGIGTDNNSTSDQAEKSSESR. The a.T hook 2 DNA-binding region spans 1016–1028; that stretch reads KKKRGRPAKTNDT. 6 disordered regions span residues 1134 to 1164, 1202 to 1225, 1245 to 1300, 1325 to 1344, 1440 to 1473, and 1518 to 1596; these read PPKV…DRIL, EKNK…SKNN, AKEK…GSKR, SSYD…KVDQ, QRQS…DQMP, and EAPP…EVLP. Residues 1146-1159 are compositionally biased toward basic residues; the sequence is RLHKRKHKHKHKHK. Basic residues predominate over residues 1450–1459; the sequence is VKKRRGRPRK. A DNA-binding region (a.T hook 3) is located at residues 1451 to 1463; sequence KKRRGRPRKQPTQ. Tandem repeats lie at residues 1520–1527, 1528–1535, and 1536–1543. The 3 X 8 AA tandem repeats of P-P-L-P-P-P-P-P stretch occupies residues 1520 to 1543; the sequence is PPLPPPPPPPLPPPPPPPLPPPPP. 2 stretches are compositionally biased toward pro residues: residues 1520-1546 and 1560-1572; these read PPLP…PLPK and PAQP…PQQP.

Interacts with SET. Expressed in numerous tissues. Expressed at low levels in myeloid and monocytic cells as well as in CD34+ cells; expression levels are higher in myeloid malignancies.

It is found in the nucleus. The polypeptide is SET-binding protein (SETBP1) (Homo sapiens (Human)).